Reading from the N-terminus, the 147-residue chain is Hemoglobin subunit delta (147 aa).

Residues 3–147 (HLTPEEKALV…VANALAHKYH (145 aa)) enclose the Globin domain. Residue serine 51 is modified to Phosphoserine. Heme b contacts are provided by histidine 64 and histidine 93.

This sequence belongs to the globin family. As to quaternary structure, heterotetramer of two delta chains and two alpha chains. In terms of tissue distribution, red blood cells.

This Trichechus manatus (Caribbean manatee) protein is Hemoglobin subunit delta (HBD).